A 211-amino-acid chain; its full sequence is UPF0329 protein ECU07_1880/ECU10_0020 (211 aa).

The protein belongs to the UPF0329 family.

This chain is UPF0329 protein ECU07_1880/ECU10_0020, found in Encephalitozoon cuniculi (strain GB-M1) (Microsporidian parasite).